Consider the following 978-residue polypeptide: Rab3 GTPase-activating protein catalytic subunit (978 aa).

3 disordered regions span residues 533-554, 586-621, and 908-936; these read EGKK…TASD, HSDT…RLHQ, and EEEP…GREL. Residues 540–554 are compositionally biased toward polar residues; sequence LYSSSESSVNKTASD. Composition is skewed to basic and acidic residues over residues 586-619 and 909-922; these read HSDT…EGRL and EEPK…DRRQ.

The protein belongs to the Rab3-GAP catalytic subunit family. The Rab3 GTPase-activating complex is a heterodimer composed of rab3gap1 and rab3gap2. The Rab3 GTPase-activating complex interacts with DMXL2. Interacts with LMAN1.

Its subcellular location is the cytoplasm. The protein localises to the endoplasmic reticulum. It is found in the golgi apparatus. The protein resides in the cis-Golgi network. Catalytic subunit of the Rab3 GTPase-activating (Rab3GAP) complex composed of rab3gap1 and rab3gap2, which has GTPase-activating protein (GAP) activity towards various Rab3 subfamily members (RAB3A, RAB3B, RAB3C and RAB3D), RAB5A and RAB43, and guanine nucleotide exchange factor (GEF) activity towards RAB18. As part of the Rab3GAP complex, acts as a GAP for Rab3 proteins by converting active RAB3-GTP to the inactive form RAB3-GDP. Rab3 proteins are involved in regulated exocytosis of neurotransmitters and hormones. The Rab3GAP complex, acts as a GEF for RAB18 by promoting the conversion of inactive RAB18-GDP to the active form RAB18-GTP. Recruits and stabilizes RAB18 at the cis-Golgi membrane where RAB18 is most likely activated. Also involved in RAB18 recruitment at the endoplasmic reticulum (ER) membrane where it maintains proper ER structure. Required for normal eye and brain development. May participate in neurodevelopmental processes such as proliferation, migration and differentiation before synapse formation, and non-synaptic vesicular release of neurotransmitters. The protein is Rab3 GTPase-activating protein catalytic subunit (rab3gap1) of Xenopus laevis (African clawed frog).